The primary structure comprises 345 residues: Dimethyladenosine transferase 1, mitochondrial (345 aa).

Residues 1–27 (MAAPGKLSTCRLPPLPTIREIIKLFRL) constitute a mitochondrion transit peptide. Positions 38, 63, 85, 86, 111, 112, and 141 each coordinate S-adenosyl-L-methionine.

Belongs to the class I-like SAM-binding methyltransferase superfamily. rRNA adenine N(6)-methyltransferase family. KsgA subfamily. In terms of assembly, interacts with mitochondrial RNA polymerase POLRMT. Interacts with TFAM. Bound to the maturing mtSSU until the late stages of assembly.

It localises to the mitochondrion. It carries out the reaction adenosine(N)/adenosine(N+1) in rRNA + 4 S-adenosyl-L-methionine = N(6)-dimethyladenosine(N)/N(6)-dimethyladenosine(N+1) in rRNA + 4 S-adenosyl-L-homocysteine + 4 H(+). Functionally, mitochondrial methyltransferase which uses S-adenosyl methionine to dimethylate two highly conserved adjacent adenosine residues (A1583 and A1584) within the loop of helix 45 at the 3-prime end of 12S rRNA, thereby regulating the assembly or stability of the small subunit of the mitochondrial ribosome. Also required for basal transcription of mitochondrial DNA, probably via its interaction with POLRMT and TFAM. Stimulates transcription independently of the methyltransferase activity. The sequence is that of Dimethyladenosine transferase 1, mitochondrial (TFB1M) from Macaca fascicularis (Crab-eating macaque).